The sequence spans 355 residues: Small ribosomal subunit protein uS2 (355 aa).

The protein belongs to the universal ribosomal protein uS2 family.

This is Small ribosomal subunit protein uS2 from Methylorubrum extorquens (strain CM4 / NCIMB 13688) (Methylobacterium extorquens).